Consider the following 265-residue polypeptide: RING finger protein 208 (265 aa).

The tract at residues 83 to 106 (MPTLEGASHTPPLPRRPRKGSSEL) is disordered. Ser-103 carries the post-translational modification Phosphoserine. An RING-type zinc finger spans residues 147-194 (CPTCGHTYNVTQRRPRVLSCLHSVCEQCLQILYESCPKYKFISCPTCH).

The protein is RING finger protein 208 (Rnf208) of Mus musculus (Mouse).